We begin with the raw amino-acid sequence, 243 residues long: GTP cyclohydrolase 1 (243 aa).

Residue T15 is modified to Phosphothreonine. Residues 18–55 (NIRPTSPYTLNPPVERDGFSWPSVGTRQRAEETEEEEK) are disordered. At S23 the chain carries Phosphoserine. Positions 132, 135, and 203 each coordinate Zn(2+).

Belongs to the GTP cyclohydrolase I family. Homodimer.

It catalyses the reaction GTP + H2O = 7,8-dihydroneopterin 3'-triphosphate + formate + H(+). Its pathway is cofactor biosynthesis; 7,8-dihydroneopterin triphosphate biosynthesis; 7,8-dihydroneopterin triphosphate from GTP: step 1/1. Its function is as follows. GTP cyclohydrolase 1 is the first enzyme in the biosynthetic pathway leading to folic acid. The protein is GTP cyclohydrolase 1 of Saccharomyces cerevisiae (strain ATCC 204508 / S288c) (Baker's yeast).